The chain runs to 91 residues: Small ribosomal subunit protein bS20 (91 aa).

The disordered stretch occupies residues Met1 to Ser23. Residues Ala7–His20 are compositionally biased toward basic residues.

It belongs to the bacterial ribosomal protein bS20 family.

Binds directly to 16S ribosomal RNA. The sequence is that of Small ribosomal subunit protein bS20 from Pseudomonas paraeruginosa (strain DSM 24068 / PA7) (Pseudomonas aeruginosa (strain PA7)).